We begin with the raw amino-acid sequence, 529 residues long: Phosphoenolpyruvate carboxykinase (ATP) (529 aa).

Substrate-binding residues include R60, Y195, and K201. Residues K201, H220, and G236–T244 contribute to the ATP site. Mn(2+) is bound by residues K201 and H220. D257 provides a ligand contact to Mn(2+). The ATP site is built by E285, R323, and S448. Residue R323 coordinates substrate.

Belongs to the phosphoenolpyruvate carboxykinase (ATP) family. Requires Mn(2+) as cofactor.

The protein resides in the cytoplasm. The enzyme catalyses oxaloacetate + ATP = phosphoenolpyruvate + ADP + CO2. It functions in the pathway carbohydrate biosynthesis; gluconeogenesis. Its function is as follows. Involved in the gluconeogenesis. Catalyzes the conversion of oxaloacetate (OAA) to phosphoenolpyruvate (PEP) through direct phosphoryl transfer between the nucleoside triphosphate and OAA. The protein is Phosphoenolpyruvate carboxykinase (ATP) of Geobacter sp. (strain M21).